The primary structure comprises 359 residues: Molybdenum import ATP-binding protein ModC (359 aa).

The ABC transporter domain maps to 1–229 (MLELNFSQQL…SALRPWLQRE (229 aa)). Position 31 to 38 (31 to 38 (GLSGAGKT)) interacts with ATP. Positions 289 to 354 (SSSIRNILPV…IKSVSFNRQN (66 aa)) constitute a Mop domain.

It belongs to the ABC transporter superfamily. Molybdate importer (TC 3.A.1.8) family. As to quaternary structure, the complex is composed of two ATP-binding proteins (ModC), two transmembrane proteins (ModB) and a solute-binding protein (ModA).

The protein resides in the cell inner membrane. It catalyses the reaction molybdate(out) + ATP + H2O = molybdate(in) + ADP + phosphate + H(+). Part of the ABC transporter complex ModABC involved in molybdenum import. Responsible for energy coupling to the transport system. The sequence is that of Molybdenum import ATP-binding protein ModC from Yersinia pestis bv. Antiqua (strain Antiqua).